Reading from the N-terminus, the 430-residue chain is Serine--tRNA ligase (430 aa).

A compositionally biased stretch (polar residues) spans 45–58 (ENLQAERNSRSKSI). The tract at residues 45 to 65 (ENLQAERNSRSKSIGQAKARG) is disordered. 237–239 (TSE) contributes to the L-serine binding site. 268–270 (RSE) contributes to the ATP binding site. An L-serine-binding site is contributed by E291. 355–358 (EISS) lines the ATP pocket. Position 391 (S391) interacts with L-serine.

This sequence belongs to the class-II aminoacyl-tRNA synthetase family. Type-1 seryl-tRNA synthetase subfamily. As to quaternary structure, homodimer. The tRNA molecule binds across the dimer.

Its subcellular location is the cytoplasm. It catalyses the reaction tRNA(Ser) + L-serine + ATP = L-seryl-tRNA(Ser) + AMP + diphosphate + H(+). The catalysed reaction is tRNA(Sec) + L-serine + ATP = L-seryl-tRNA(Sec) + AMP + diphosphate + H(+). It participates in aminoacyl-tRNA biosynthesis; selenocysteinyl-tRNA(Sec) biosynthesis; L-seryl-tRNA(Sec) from L-serine and tRNA(Sec): step 1/1. Its function is as follows. Catalyzes the attachment of serine to tRNA(Ser). Is also able to aminoacylate tRNA(Sec) with serine, to form the misacylated tRNA L-seryl-tRNA(Sec), which will be further converted into selenocysteinyl-tRNA(Sec). This Erwinia tasmaniensis (strain DSM 17950 / CFBP 7177 / CIP 109463 / NCPPB 4357 / Et1/99) protein is Serine--tRNA ligase.